Reading from the N-terminus, the 228-residue chain is MKSTRPFHPTPVITIDGPTASGKGTVAALLAAHLGFHLLDSGALYRLAALASVRYGIAAEDIDALVKLIDDLHITFREGCAQLDGVDVSNDIRAEAVGNRASAIAVHGPVRSALVARQRAFRKTPGLVADGRDMGTVIFPDAVLKVFLTASAEARAARRHKQLMQKGFSANIDDLLRDLRERDARDSNRAAAPLKPAADARLLDTSALSVDEAVDQVLQWYRALGQPA.

17–25 lines the ATP pocket; that stretch reads GPTASGKGT.

The protein belongs to the cytidylate kinase family. Type 1 subfamily.

Its subcellular location is the cytoplasm. It carries out the reaction CMP + ATP = CDP + ADP. It catalyses the reaction dCMP + ATP = dCDP + ADP. This is Cytidylate kinase from Burkholderia ambifaria (strain MC40-6).